The chain runs to 264 residues: Fibroblast growth factor 5 (264 aa).

Residues 1–20 form the signal peptide; that stretch reads MSLSLLFLIFCSHLIHSAWA. The disordered stretch occupies residues 25-81; the sequence is RLTPEGQPAPPRNPGDSSGSRGRSSATFSSSSASSPVAASPGSQGSGSEHSSFQWSP. A compositionally biased stretch (low complexity) spans 38-72; that stretch reads PGDSSGSRGRSSATFSSSSASSPVAASPGSQGSGS. Asn-108 carries an N-linked (GlcNAc...) asparagine glycan. A disordered region spans residues 227 to 254; the sequence is FTVTVPEKKKPPVKPKVPLSQPRRSPSP.

This sequence belongs to the heparin-binding growth factors family. In terms of assembly, interacts with FGFR1 and FGFR2. Affinity between fibroblast growth factors (FGFs) and their receptors is increased by heparan sulfate glycosaminoglycans that function as coreceptors.

The protein resides in the secreted. Plays an important role in the regulation of cell proliferation and cell differentiation. Required for normal regulation of the hair growth cycle. Functions as an inhibitor of hair elongation by promoting progression from anagen, the growth phase of the hair follicle, into catagen the apoptosis-induced regression phase. The polypeptide is Fibroblast growth factor 5 (Fgf5) (Mus musculus (Mouse)).